The following is a 187-amino-acid chain: Tumor necrosis factor ligand superfamily member 4 (187 aa).

At 1–23 (MEGVRPLEENVGNAPRPRFERNK) the chain is on the cytoplasmic side. A helical; Signal-anchor for type II membrane protein transmembrane segment spans residues 24-44 (LLLVASVVQALGLLLCLTYVC). Topologically, residues 45 to 187 (QHSHAPEVSL…LQNPGGYCAP (143 aa)) are extracellular. Residues 58 to 177 (PIENIMTQLQ…SVNAGELIVI (120 aa)) form the THD domain. Disulfide bonds link cysteine 74–cysteine 164 and cysteine 101–cysteine 185. N-linked (GlcNAc...) asparagine glycans are attached at residues asparagine 94 and asparagine 156.

The protein belongs to the tumor necrosis factor family. In terms of assembly, homotrimer.

It localises to the membrane. Its function is as follows. Cytokine that binds to TNFRSF4. Co-stimulates T-cell proliferation and cytokine production. This is Tumor necrosis factor ligand superfamily member 4 (TNFSF4) from Oryctolagus cuniculus (Rabbit).